The following is a 344-amino-acid chain: Pre-mRNA-splicing factor cwc-21 (344 aa).

Polar residues predominate over residues 1–19; that stretch reads MSDNVGLSTPRGSGTSGYV. Disordered stretches follow at residues 1-58 and 98-344; these read MSDN…LEHD and EMER…DNRD. Basic and acidic residues predominate over residues 38–58; that stretch reads KDFDSLKHQPRQPDKGLLEHD. In terms of domain architecture, CWF21 spans 55–98; the sequence is LEHDRKREVEVKVFELRDKLEEEGVEEDEIETRCDELRRKLLAE. Residues 69 to 105 adopt a coiled-coil conformation; sequence ELRDKLEEEGVEEDEIETRCDELRRKLLAEMERNQNS. Composition is skewed to basic and acidic residues over residues 120-167, 188-226, and 238-277; these read QVHE…REAN, RGGD…DRPP, and GGRD…DTGR. The span at 288-306 shows a compositional bias: basic residues; that stretch reads SRSRSRSRSYSRSRSPPRR. Basic and acidic residues-rich tracts occupy residues 307–316 and 327–344; these read RAADSQDRSL and SPDR…DNRD.

Belongs to the CWC21 family. In terms of assembly, associates with the NTC complex (or PRP19-associated complex). The NTC complex associates with the spliceosome after the release of the U1 and U4 snRNAs and forms the CWC spliceosome subcomplex reminiscent of a late-stage spliceosome.

It is found in the cytoplasm. The protein resides in the nucleus. Involved in pre-mRNA splicing. May function at or prior to the first catalytic step of splicing at the catalytic center of the spliceosome. May do so by stabilizing the catalytic center or the position of the RNA substrate. In Neurospora crassa (strain ATCC 24698 / 74-OR23-1A / CBS 708.71 / DSM 1257 / FGSC 987), this protein is Pre-mRNA-splicing factor cwc-21 (cwc-21).